Consider the following 200-residue polypeptide: 3-isopropylmalate dehydratase small subunit (200 aa).

This sequence belongs to the LeuD family. LeuD type 1 subfamily. Heterodimer of LeuC and LeuD.

It carries out the reaction (2R,3S)-3-isopropylmalate = (2S)-2-isopropylmalate. The protein operates within amino-acid biosynthesis; L-leucine biosynthesis; L-leucine from 3-methyl-2-oxobutanoate: step 2/4. In terms of biological role, catalyzes the isomerization between 2-isopropylmalate and 3-isopropylmalate, via the formation of 2-isopropylmaleate. The polypeptide is 3-isopropylmalate dehydratase small subunit (Vibrio vulnificus (strain CMCP6)).